The sequence spans 302 residues: Light-independent protochlorophyllide reductase iron-sulfur ATP-binding protein (302 aa).

Residues 46-51 and Lys75 contribute to the ATP site; that span reads GIGKST. A Mg(2+)-binding site is contributed by Ser50. Residues Cys131 and Cys165 each contribute to the [4Fe-4S] cluster site. 216 to 217 lines the ATP pocket; it reads NR.

The protein belongs to the NifH/BchL/ChlL family. As to quaternary structure, homodimer. Protochlorophyllide reductase is composed of three subunits; BchL, BchN and BchB. [4Fe-4S] cluster is required as a cofactor.

It catalyses the reaction chlorophyllide a + oxidized 2[4Fe-4S]-[ferredoxin] + 2 ADP + 2 phosphate = protochlorophyllide a + reduced 2[4Fe-4S]-[ferredoxin] + 2 ATP + 2 H2O. It participates in porphyrin-containing compound metabolism; bacteriochlorophyll biosynthesis (light-independent). In terms of biological role, component of the dark-operative protochlorophyllide reductase (DPOR) that uses Mg-ATP and reduced ferredoxin to reduce ring D of protochlorophyllide (Pchlide) to form chlorophyllide a (Chlide). This reaction is light-independent. The L component serves as a unique electron donor to the NB-component of the complex, and binds Mg-ATP. In Methylocella silvestris (strain DSM 15510 / CIP 108128 / LMG 27833 / NCIMB 13906 / BL2), this protein is Light-independent protochlorophyllide reductase iron-sulfur ATP-binding protein.